A 356-amino-acid chain; its full sequence is Arginine kinase Lit v 2 (356 aa).

The region spanning 9–91 (KLEAGFKKLE…FDPIIEDYHV (83 aa)) is the Phosphagen kinase N-terminal domain. 64-68 (GVGIY) lines the L-arginine pocket. The 238-residue stretch at 119 to 356 (FVISTRVRCG…LELIKMEKEM (238 aa)) folds into the Phosphagen kinase C-terminal domain. Residues 122 to 126 (STRVR) and histidine 185 contribute to the ATP site. Glutamate 225 contacts L-arginine. Arginine 229 is an ATP binding site. L-arginine is bound at residue cysteine 271. Residues 280 to 284 (RASVH) and 309 to 314 (RGTRGE) each bind ATP. An L-arginine-binding site is contributed by glutamate 314.

Belongs to the ATP:guanido phosphotransferase family. Expressed in muscle (at protein level). Expressed in muscle, heart, nerve, stomach and hemocytes, with the highest expression in muscle. Very low expression in eyestalk and intestine. Not expressed in hepatopancreas, gill and skin.

It carries out the reaction L-arginine + ATP = N(omega)-phospho-L-arginine + ADP + H(+). No change in activity after supplementation with 10 mM glucose. However, activity decreases significantly when glucose concentration is higher than 50 mM and almost all activity is lost with 200 mM glucose. Activity is significantly increased after treatment with 10 mM and 50 mM ATP. However, activity drops significantly with 200 mM ATP. Inhibited by 10-200 mM alpha-ketoglutarate. No change in activity after incubation with 10-200 mM L-citrulline, L-ornaline or glycerol. Functionally, catalyzes the reversible transfer of high energy ATP gamma-phosphate group to L-arginine. This is Arginine kinase Lit v 2 from Penaeus vannamei (Whiteleg shrimp).